The chain runs to 65 residues: Small hydrophobic protein (65 aa).

The Intravirion segment spans residues 1–20; sequence MGNTSITIEFTSKFWPYFTL. An interaction with host BCAP31 region spans residues 6–15; it reads ITIEFTSKFW. The helical; Signal-anchor for type II membrane protein transmembrane segment at 21 to 44 threads the bilayer; the sequence is IHMILTPISLLIIITIMIAILNKL. Residues 38–43 are interaction with small-molecule inhibitor; the sequence is IAILNK. At 45–65 the chain is on the virion surface side; that stretch reads SEHKTFCNKTLELGQMYQINT. N52 is a glycosylation site (N-linked (GlcNAc...) asparagine; by host).

Belongs to the orthopneumovirus small hydrophobic protein family. In terms of assembly, homopentamer forming a funnel-like pore. Interacts with glycoprotein G; this interaction occurs on the surface of virion particles and infected cells. Interacts with host BCAP31 (via C-terminus); this interaction is direct. Post-translationally, four species of SH have been detected in infected cell cytoplasm: a 7.5 kDa non-glycosylated form (SH0), a 13-15 kDa form that contains one or two N-linked carbohydrate side chains of the high-mannose type (SHg), a 21-30 kDa polylactosaminoglycan-modified form of the protein (SHp), and the isoform generated by alternative translational initiation. Of these different forms, SH0 is by far the most abundant protein detected during virus infection. Tyrosine phosphorylated.

The protein localises to the virion membrane. Its subcellular location is the host cell membrane. It is found in the host Golgi apparatus membrane. The protein resides in the host endoplasmic reticulum membrane. With respect to regulation, channel activity is inhibited by copper. Also inhibited by small-molecule pyronin B. Its function is as follows. Viroporin that forms a homopentameric ion channel displaying low ion selectivity. May play a role in virus morphogenesis and pathogenicity at various stages of the viral life cycle. Accumulates at the membrane of the Golgi apparatus in infected cells and may facilitate virus release by modifying the secretory pathway. May enhance host membrane permeability and disrupt cellular ion homeostasis, which can be sensed as damage-associated molecular patterns/danger signals, triggering NLRP3 inflammasome activation and inflammatory immune response. Also inhibits host TNFA-mediated signaling pathway and may delay apoptosis, allowing time for the virus to replicate. The sequence is that of Small hydrophobic protein from Human respiratory syncytial virus B (strain 18537).